A 244-amino-acid chain; its full sequence is Phosphoadenosine 5'-phosphosulfate reductase (244 aa).

The active-site Nucleophile; cysteine thiosulfonate intermediate is cysteine 239.

The protein belongs to the PAPS reductase family. CysH subfamily.

It is found in the cytoplasm. It carries out the reaction [thioredoxin]-disulfide + sulfite + adenosine 3',5'-bisphosphate + 2 H(+) = [thioredoxin]-dithiol + 3'-phosphoadenylyl sulfate. It functions in the pathway sulfur metabolism; hydrogen sulfide biosynthesis; sulfite from sulfate: step 3/3. In terms of biological role, catalyzes the formation of sulfite from phosphoadenosine 5'-phosphosulfate (PAPS) using thioredoxin as an electron donor. In Citrobacter koseri (strain ATCC BAA-895 / CDC 4225-83 / SGSC4696), this protein is Phosphoadenosine 5'-phosphosulfate reductase.